A 1463-amino-acid chain; its full sequence is DNA polymerase III PolC-type (1463 aa).

Residues 425 to 581 form the Exonuclease domain; sequence YVVFDVETTG…YDAEATGRLL (157 aa).

Belongs to the DNA polymerase type-C family. PolC subfamily.

It is found in the cytoplasm. The enzyme catalyses DNA(n) + a 2'-deoxyribonucleoside 5'-triphosphate = DNA(n+1) + diphosphate. Functionally, required for replicative DNA synthesis. This DNA polymerase also exhibits 3' to 5' exonuclease activity. The chain is DNA polymerase III PolC-type from Streptococcus suis (strain 98HAH33).